A 128-amino-acid chain; its full sequence is MYDNLKSLGITNPEEIDRYSLRQEANNDILKIYFQKDKGEFFAKRVKFKYPRQRKTVVADGVGQGYKEVQEISPNLRYIIDELDQICQRDRSEVDLKRKILDDLRHLESVVTNKISEIEADLEKLTRK.

It belongs to the UPF0325 family.

The sequence is that of UPF0325 protein YaeH from Escherichia coli (strain ATCC 8739 / DSM 1576 / NBRC 3972 / NCIMB 8545 / WDCM 00012 / Crooks).